We begin with the raw amino-acid sequence, 389 residues long: Calreticulin (389 aa).

The signal sequence occupies residues 1–13 (MFTLFLLIALSSA). Positions 12–189 (SAKVYFHETF…GVEKQEGKFD (178 aa)) are N-domain. Positions 20, 52, and 53 each coordinate Ca(2+). The cysteines at positions 96 and 130 are disulfide-linked. Residues tyrosine 100, lysine 102, tyrosine 121, and aspartate 128 each contribute to the an alpha-D-glucoside site. 7 repeat units span residues 183–194 (KQEGKFDEDWDM), 202–213 (DPNVSKPADWVD), 219–230 (DPNDKKPEGWDD), 237–248 (DPNAKKPEEWND), 252–262 (GEWEAPTIENP), 266–276 (GEWKPKRIPNP), and 280–290 (GEWVHPQIANP). The interval 183-248 (KQEGKFDEDW…NAKKPEEWND (66 aa)) is 4 X approximate repeats. Positions 190 to 301 (EDWDMLAPKE…YVYDPELYKY (112 aa)) are P-domain. A compositionally biased stretch (basic and acidic residues) spans 213–232 (DEKEIDDPNDKKPEGWDDIP). Residues 213–256 (DEKEIDDPNDKKPEGWDDIPKTIVDPNAKKPEEWNDEDDGEWEA) form a disordered region. Residues 252-290 (GEWEAPTIENPEYKGEWKPKRIPNPAYKGEWVHPQIANP) are 3 X approximate repeats. Positions 302–389 (DSFAYIGIDV…IKKEENKEEL (88 aa)) are C-domain. Residue aspartate 310 coordinates an alpha-D-glucoside. Aspartate 321 lines the Ca(2+) pocket. Residues 329-388 (IEEAEKEAKVILERNAAEKKMRDEIKEAEKQKEEEAKKEAEKQKEEETKEEIKKEENKEE) are a coiled coil. The interval 347-389 (KKMRDEIKEAEKQKEEEAKKEAEKQKEEETKEEIKKEENKEEL) is disordered. The Prevents secretion from ER signature appears at 386-389 (KEEL).

The protein belongs to the calreticulin family. In terms of assembly, interacts (via C-terminus) with host C1q.

It is found in the endoplasmic reticulum lumen. It localises to the cell projection. The protein localises to the uropodium. The protein resides in the cell surface. Its subcellular location is the phagocytic cup. Molecular calcium-binding chaperone promoting folding, oligomeric assembly and quality control in the ER via the calreticulin/calnexin cycle. This lectin may interact transiently with almost all of the monoglucosylated glycoproteins that are synthesized in the ER. Plays a role in host cell phagocytosis, possibly by acting as a receptor for host C1q. Binding to C1q prevents the activation of the host classical complement pathway. Also, binds to apoptotic host cells independently of host C1q and collectins. The polypeptide is Calreticulin (Entamoeba histolytica (strain ATCC 30459 / HM-1:IMSS / ABRM)).